Here is a 428-residue protein sequence, read N- to C-terminus: UPF0597 protein Dde_0807 (428 aa).

Belongs to the UPF0597 family.

The chain is UPF0597 protein Dde_0807 from Oleidesulfovibrio alaskensis (strain ATCC BAA-1058 / DSM 17464 / G20) (Desulfovibrio alaskensis).